A 177-amino-acid polypeptide reads, in one-letter code: NPCCDAATCKLKSGSQCGHGDCCEQCKFSKSGTECRASMSECDPAEHCTGQSSECPADVFHKNGQPCLDNYGYCYNGNCPIMYHQCYDLFGADVYEAEDSCFERNQKGNYYGYCRKENGNKIPCAPEDVKCGRLYCKDNSPGQNNPCKMFYSNEDEHKGMVLPGTKCADGKVCSNRQ.

The Disintegrin domain occupies 1-63 (NPCCDAATCK…ECPADVFHKN (63 aa)). Disulfide bonds link cysteine 3–cysteine 26, cysteine 17–cysteine 23, cysteine 22–cysteine 48, cysteine 35–cysteine 55, cysteine 42–cysteine 74, cysteine 67–cysteine 79, cysteine 86–cysteine 136, cysteine 101–cysteine 147, cysteine 114–cysteine 124, and cysteine 131–cysteine 173. The D/ECD-tripeptide signature appears at 41 to 43 (ECD). Residues aspartate 43, proline 44, glutamate 46, aspartate 58, and valine 59 each coordinate Ca(2+).

Belongs to the venom metalloproteinase (M12B) family. P-III subfamily. P-IIIa sub-subfamily. In terms of assembly, monomer. Zn(2+) serves as cofactor. In terms of processing, glycosylated. As to expression, expressed by the venom gland.

The protein localises to the secreted. Snake venom metalloproteinase that impairs hemostasis in the envenomed animal. This is Zinc metalloproteinase-disintegrin-like scutiarin from Crotalus scutulatus scutulatus (Mojave rattlesnake).